The following is a 557-amino-acid chain: Dihydroxy-acid dehydratase (557 aa).

A Mg(2+)-binding site is contributed by aspartate 78. [2Fe-2S] cluster is bound at residue cysteine 119. Mg(2+) contacts are provided by aspartate 120 and lysine 121. At lysine 121 the chain carries N6-carboxylysine. Residue cysteine 192 participates in [2Fe-2S] cluster binding. Glutamate 442 provides a ligand contact to Mg(2+). Catalysis depends on serine 468, which acts as the Proton acceptor.

Belongs to the IlvD/Edd family. In terms of assembly, homodimer. [2Fe-2S] cluster serves as cofactor. The cofactor is Mg(2+).

The enzyme catalyses (2R)-2,3-dihydroxy-3-methylbutanoate = 3-methyl-2-oxobutanoate + H2O. The catalysed reaction is (2R,3R)-2,3-dihydroxy-3-methylpentanoate = (S)-3-methyl-2-oxopentanoate + H2O. Its pathway is amino-acid biosynthesis; L-isoleucine biosynthesis; L-isoleucine from 2-oxobutanoate: step 3/4. It functions in the pathway amino-acid biosynthesis; L-valine biosynthesis; L-valine from pyruvate: step 3/4. In terms of biological role, functions in the biosynthesis of branched-chain amino acids. Catalyzes the dehydration of (2R,3R)-2,3-dihydroxy-3-methylpentanoate (2,3-dihydroxy-3-methylvalerate) into 2-oxo-3-methylpentanoate (2-oxo-3-methylvalerate) and of (2R)-2,3-dihydroxy-3-methylbutanoate (2,3-dihydroxyisovalerate) into 2-oxo-3-methylbutanoate (2-oxoisovalerate), the penultimate precursor to L-isoleucine and L-valine, respectively. This Bacillus cereus (strain 03BB102) protein is Dihydroxy-acid dehydratase.